A 565-amino-acid chain; its full sequence is NAD-dependent malic enzyme (565 aa).

Tyrosine 104 functions as the Proton donor in the catalytic mechanism. Arginine 157 contacts NAD(+). Lysine 175 functions as the Proton acceptor in the catalytic mechanism. The a divalent metal cation site is built by glutamate 246, aspartate 247, and aspartate 270. Positions 270 and 418 each coordinate NAD(+).

It belongs to the malic enzymes family. In terms of assembly, homotetramer. Mg(2+) is required as a cofactor. It depends on Mn(2+) as a cofactor.

The enzyme catalyses (S)-malate + NAD(+) = pyruvate + CO2 + NADH. It catalyses the reaction oxaloacetate + H(+) = pyruvate + CO2. The polypeptide is NAD-dependent malic enzyme (Salmonella heidelberg (strain SL476)).